A 97-amino-acid chain; its full sequence is Small ribosomal subunit protein uS19 (97 aa).

It belongs to the universal ribosomal protein uS19 family.

Its function is as follows. Protein S19 forms a complex with S13 that binds strongly to the 16S ribosomal RNA. The polypeptide is Small ribosomal subunit protein uS19 (Pelagibacter ubique (strain HTCC1062)).